A 258-amino-acid polypeptide reads, in one-letter code: 14-3-3-like protein F (258 aa).

It belongs to the 14-3-3 family.

The chain is 14-3-3-like protein F from Nicotiana tabacum (Common tobacco).